The following is a 287-amino-acid chain: Ribosomal RNA small subunit methyltransferase A (287 aa).

S-adenosyl-L-methionine contacts are provided by Asn-28, Leu-30, Gly-55, Glu-77, Asp-103, and Asn-123.

The protein belongs to the class I-like SAM-binding methyltransferase superfamily. rRNA adenine N(6)-methyltransferase family. RsmA subfamily.

It localises to the cytoplasm. The enzyme catalyses adenosine(1518)/adenosine(1519) in 16S rRNA + 4 S-adenosyl-L-methionine = N(6)-dimethyladenosine(1518)/N(6)-dimethyladenosine(1519) in 16S rRNA + 4 S-adenosyl-L-homocysteine + 4 H(+). Its function is as follows. Specifically dimethylates two adjacent adenosines (A1518 and A1519) in the loop of a conserved hairpin near the 3'-end of 16S rRNA in the 30S particle. May play a critical role in biogenesis of 30S subunits. This Rhodopseudomonas palustris (strain TIE-1) protein is Ribosomal RNA small subunit methyltransferase A.